A 209-amino-acid chain; its full sequence is Uracil phosphoribosyltransferase (209 aa).

5-phospho-alpha-D-ribose 1-diphosphate is bound by residues Arg-79, Arg-104, and 131 to 139; that span reads DPMLATGGS. Residues Ile-194 and 199–201 contribute to the uracil site; that span reads GDA. 5-phospho-alpha-D-ribose 1-diphosphate is bound at residue Asp-200.

It belongs to the UPRTase family. Requires Mg(2+) as cofactor.

It carries out the reaction UMP + diphosphate = 5-phospho-alpha-D-ribose 1-diphosphate + uracil. It functions in the pathway pyrimidine metabolism; UMP biosynthesis via salvage pathway; UMP from uracil: step 1/1. Allosterically activated by GTP. Its function is as follows. Catalyzes the conversion of uracil and 5-phospho-alpha-D-ribose 1-diphosphate (PRPP) to UMP and diphosphate. The sequence is that of Uracil phosphoribosyltransferase from Brevibacillus brevis (strain 47 / JCM 6285 / NBRC 100599).